The following is a 341-amino-acid chain: Uroporphyrinogen decarboxylase (341 aa).

Residues 23-27, aspartate 73, tyrosine 147, serine 202, and histidine 318 contribute to the substrate site; that span reads RQAGR.

Belongs to the uroporphyrinogen decarboxylase family. As to quaternary structure, homodimer.

The protein resides in the cytoplasm. The enzyme catalyses uroporphyrinogen III + 4 H(+) = coproporphyrinogen III + 4 CO2. The protein operates within porphyrin-containing compound metabolism; protoporphyrin-IX biosynthesis; coproporphyrinogen-III from 5-aminolevulinate: step 4/4. Functionally, catalyzes the decarboxylation of four acetate groups of uroporphyrinogen-III to yield coproporphyrinogen-III. The chain is Uroporphyrinogen decarboxylase from Erythrobacter litoralis (strain HTCC2594).